The sequence spans 120 residues: NAD(P)H-quinone oxidoreductase subunit 3, chloroplastic (120 aa).

Transmembrane regions (helical) follow at residues 11–31 (VVFFIVACLVPILALSGSKLI), 65–85 (FALIFVIFDVETLFLYPWAIV), and 89–109 (LGITAFLETLIFLSILIIGLV).

Belongs to the complex I subunit 3 family. NDH is composed of at least 16 different subunits, 5 of which are encoded in the nucleus.

It localises to the plastid. The protein localises to the chloroplast thylakoid membrane. The enzyme catalyses a plastoquinone + NADH + (n+1) H(+)(in) = a plastoquinol + NAD(+) + n H(+)(out). The catalysed reaction is a plastoquinone + NADPH + (n+1) H(+)(in) = a plastoquinol + NADP(+) + n H(+)(out). Its function is as follows. NDH shuttles electrons from NAD(P)H:plastoquinone, via FMN and iron-sulfur (Fe-S) centers, to quinones in the photosynthetic chain and possibly in a chloroplast respiratory chain. The immediate electron acceptor for the enzyme in this species is believed to be plastoquinone. Couples the redox reaction to proton translocation, and thus conserves the redox energy in a proton gradient. In Mesostigma viride (Green alga), this protein is NAD(P)H-quinone oxidoreductase subunit 3, chloroplastic.